The primary structure comprises 193 residues: Ribosomal RNA small subunit methyltransferase G (193 aa).

S-adenosyl-L-methionine is bound by residues Gly-62, Phe-67, 111–112 (IE), and Arg-125.

It belongs to the methyltransferase superfamily. RNA methyltransferase RsmG family.

It localises to the cytoplasm. It catalyses the reaction guanosine(527) in 16S rRNA + S-adenosyl-L-methionine = N(7)-methylguanosine(527) in 16S rRNA + S-adenosyl-L-homocysteine. Functionally, specifically methylates the N7 position of guanine in position 527 of 16S rRNA. This is Ribosomal RNA small subunit methyltransferase G from Gluconobacter oxydans (strain 621H) (Gluconobacter suboxydans).